The chain runs to 289 residues: Iron-sulfur cluster carrier protein (289 aa).

Over residues 1–18 (MAEECSGNCDSCGSSSDC) the composition is skewed to low complexity. Positions 1–20 (MAEECSGNCDSCGSSSDCSD) are disordered. 48 to 55 (GKGGVGKS) contacts ATP.

Belongs to the Mrp/NBP35 ATP-binding proteins family. In terms of assembly, homodimer.

In terms of biological role, binds and transfers iron-sulfur (Fe-S) clusters to target apoproteins. Can hydrolyze ATP. In Methanococcus maripaludis (strain DSM 14266 / JCM 13030 / NBRC 101832 / S2 / LL), this protein is Iron-sulfur cluster carrier protein.